Consider the following 452-residue polypeptide: Probable 1,4-beta-D-glucan cellobiohydrolase A (452 aa).

The signal sequence occupies residues 1-17 (MHQRALLFSALLTAVRA). Residue Asn62 is glycosylated (N-linked (GlcNAc...) asparagine). Glu227 acts as the Nucleophile in catalysis. Glu232 functions as the Proton donor in the catalytic mechanism. 4 N-linked (GlcNAc...) asparagine glycosylation sites follow: Asn285, Asn335, Asn402, and Asn445.

It belongs to the glycosyl hydrolase 7 (cellulase C) family.

It localises to the secreted. It catalyses the reaction Hydrolysis of (1-&gt;4)-beta-D-glucosidic linkages in cellulose and cellotetraose, releasing cellobiose from the non-reducing ends of the chains.. Its function is as follows. The biological conversion of cellulose to glucose generally requires three types of hydrolytic enzymes: (1) Endoglucanases which cut internal beta-1,4-glucosidic bonds; (2) Exocellobiohydrolases that cut the disaccharide cellobiose from the non-reducing end of the cellulose polymer chain; (3) Beta-1,4-glucosidases which hydrolyze the cellobiose and other short cello-oligosaccharides to glucose. The sequence is that of Probable 1,4-beta-D-glucan cellobiohydrolase A (cbhA) from Aspergillus niger (strain ATCC MYA-4892 / CBS 513.88 / FGSC A1513).